Here is a 531-residue protein sequence, read N- to C-terminus: Putative F-box protein At2g02890 (531 aa).

Positions 141–188 constitute an F-box domain; sequence RHSSSLTNDLIEEILSRLHSKSVARFRCVSKQCASMFASPYFKKLFQT.

The sequence is that of Putative F-box protein At2g02890 from Arabidopsis thaliana (Mouse-ear cress).